Reading from the N-terminus, the 219-residue chain is Thiopurine S-methyltransferase (219 aa).

Residues Trp-10, Leu-45, Glu-66, and Arg-123 each coordinate S-adenosyl-L-methionine.

It belongs to the class I-like SAM-binding methyltransferase superfamily. TPMT family.

Its subcellular location is the cytoplasm. The catalysed reaction is S-adenosyl-L-methionine + a thiopurine = S-adenosyl-L-homocysteine + a thiopurine S-methylether.. The polypeptide is Thiopurine S-methyltransferase (Marinobacter nauticus (strain ATCC 700491 / DSM 11845 / VT8) (Marinobacter aquaeolei)).